Here is a 606-residue protein sequence, read N- to C-terminus: NADH-ubiquinone oxidoreductase chain 5 (606 aa).

The next 16 membrane-spanning stretches (helical) occupy residues 4–24 (FSSL…AINF), 43–63 (AFIT…EMII), 84–104 (FFSM…MEFS), 114–134 (INQF…LVTA), 140–160 (LFIG…WWYG), 171–191 (AILY…WFLI), 213–233 (LMGL…HPWL), 241–261 (TPVS…FLLI), 272–292 (FGQS…AMCA), 301–320 (IIAF…IGIN), 325–347 (AFLH…GSII), 366–386 (MPFT…MPFL), 413–433 (LVAT…ALLG), 457–477 (LLIG…PMTI), 485–505 (YLKM…LEIS), and 582–602 (GLIK…TTLL).

Belongs to the complex I subunit 5 family. In terms of assembly, core subunit of respiratory chain NADH dehydrogenase (Complex I) which is composed of 45 different subunits.

The protein resides in the mitochondrion inner membrane. It carries out the reaction a ubiquinone + NADH + 5 H(+)(in) = a ubiquinol + NAD(+) + 4 H(+)(out). Core subunit of the mitochondrial membrane respiratory chain NADH dehydrogenase (Complex I) which catalyzes electron transfer from NADH through the respiratory chain, using ubiquinone as an electron acceptor. Essential for the catalytic activity and assembly of complex I. This Ovis aries (Sheep) protein is NADH-ubiquinone oxidoreductase chain 5 (MT-ND5).